A 136-amino-acid chain; its full sequence is Nucleoside diphosphate kinase (136 aa).

Residues Lys-9, Phe-57, Arg-85, Thr-91, Arg-102, and Asn-112 each contribute to the ATP site. His-115 (pros-phosphohistidine intermediate) is an active-site residue.

It belongs to the NDK family. In terms of assembly, homotetramer. The cofactor is Mg(2+).

It localises to the cytoplasm. It carries out the reaction a 2'-deoxyribonucleoside 5'-diphosphate + ATP = a 2'-deoxyribonucleoside 5'-triphosphate + ADP. It catalyses the reaction a ribonucleoside 5'-diphosphate + ATP = a ribonucleoside 5'-triphosphate + ADP. Functionally, major role in the synthesis of nucleoside triphosphates other than ATP. The ATP gamma phosphate is transferred to the NDP beta phosphate via a ping-pong mechanism, using a phosphorylated active-site intermediate. This is Nucleoside diphosphate kinase from Acetivibrio thermocellus (strain ATCC 27405 / DSM 1237 / JCM 9322 / NBRC 103400 / NCIMB 10682 / NRRL B-4536 / VPI 7372) (Clostridium thermocellum).